The sequence spans 149 residues: 3-dehydroquinate dehydratase (149 aa).

The Proton acceptor role is filled by tyrosine 22. Substrate-binding residues include asparagine 74, histidine 80, and aspartate 87. Histidine 100 functions as the Proton donor in the catalytic mechanism. Substrate-binding positions include 101–102 (MS) and arginine 111.

Belongs to the type-II 3-dehydroquinase family. Homododecamer.

It catalyses the reaction 3-dehydroquinate = 3-dehydroshikimate + H2O. It participates in metabolic intermediate biosynthesis; chorismate biosynthesis; chorismate from D-erythrose 4-phosphate and phosphoenolpyruvate: step 3/7. In terms of biological role, catalyzes a trans-dehydration via an enolate intermediate. The sequence is that of 3-dehydroquinate dehydratase from Leptothrix cholodnii (strain ATCC 51168 / LMG 8142 / SP-6) (Leptothrix discophora (strain SP-6)).